The sequence spans 316 residues: Biotin synthase (316 aa).

Residues 38 to 266 enclose the Radical SAM core domain; that stretch reads YKGKKIELCA…DKDIRVCGGR (229 aa). Residues C56, C60, and C63 each coordinate [4Fe-4S] cluster. S100, C131, C191, and R261 together coordinate [2Fe-2S] cluster.

This sequence belongs to the radical SAM superfamily. Biotin synthase family. As to quaternary structure, homodimer. It depends on [4Fe-4S] cluster as a cofactor. The cofactor is [2Fe-2S] cluster.

It catalyses the reaction (4R,5S)-dethiobiotin + (sulfur carrier)-SH + 2 reduced [2Fe-2S]-[ferredoxin] + 2 S-adenosyl-L-methionine = (sulfur carrier)-H + biotin + 2 5'-deoxyadenosine + 2 L-methionine + 2 oxidized [2Fe-2S]-[ferredoxin]. It functions in the pathway cofactor biosynthesis; biotin biosynthesis; biotin from 7,8-diaminononanoate: step 2/2. Catalyzes the conversion of dethiobiotin (DTB) to biotin by the insertion of a sulfur atom into dethiobiotin via a radical-based mechanism. The polypeptide is Biotin synthase (Thermodesulfovibrio yellowstonii (strain ATCC 51303 / DSM 11347 / YP87)).